Here is a 559-residue protein sequence, read N- to C-terminus: Oxygen-dependent choline dehydrogenase (559 aa).

4–33 (DYIIIGAGSAGNVLATRLTEDSDVTVLLLE) contributes to the FAD binding site. The active-site Proton acceptor is histidine 473.

Belongs to the GMC oxidoreductase family. It depends on FAD as a cofactor.

The enzyme catalyses choline + A = betaine aldehyde + AH2. It catalyses the reaction betaine aldehyde + NAD(+) + H2O = glycine betaine + NADH + 2 H(+). The protein operates within amine and polyamine biosynthesis; betaine biosynthesis via choline pathway; betaine aldehyde from choline (cytochrome c reductase route): step 1/1. Functionally, involved in the biosynthesis of the osmoprotectant glycine betaine. Catalyzes the oxidation of choline to betaine aldehyde and betaine aldehyde to glycine betaine at the same rate. The polypeptide is Oxygen-dependent choline dehydrogenase (Cronobacter sakazakii (strain ATCC BAA-894) (Enterobacter sakazakii)).